Consider the following 54-residue polypeptide: Ovomucoid (54 aa).

A Kazal-like domain is found at 4–54; the sequence is VDCSEHPKPACTLEDRPLCGSDNKIYSNKCDFCNAVLESNGTLTLSHFGKC. Cystine bridges form between C6-C36, C14-C33, and C22-C54. N-linked (GlcNAc...) asparagine glycosylation is present at N43.

It is found in the secreted. This Argusianus argus (Great argus) protein is Ovomucoid.